The primary structure comprises 608 residues: Albumin 1 (608 aa).

The first 14 residues, 1–14 (MQWLSVCSLLVLLS), serve as a signal peptide directing secretion. Positions 15 to 18 (VLSR) are excised as a propeptide. 3 Albumin domains span residues 19–205 (SQAQ…TFQH), 206–398 (AVMK…AGSD), and 402–600 (KITD…KLVS). Cystine bridges form between Cys-26–Cys-72, Cys-71–Cys-80, Cys-93–Cys-108, Cys-107–Cys-118, Cys-142–Cys-187, Cys-186–Cys-195, Cys-218–Cys-264, Cys-263–Cys-271, Cys-283–Cys-299, Cys-298–Cys-309, Cys-336–Cys-381, Cys-380–Cys-389, Cys-414–Cys-460, Cys-459–Cys-471, Cys-484–Cys-500, Cys-499–Cys-510, Cys-537–Cys-582, and Cys-581–Cys-590. Asn-501 carries N-linked (GlcNAc...) asparagine glycosylation.

The protein belongs to the ALB/AFP/VDB family. As to expression, plasma.

It is found in the secreted. Binds water, Ca(2+), Na(+), K(+), fatty acids, hormones, bilirubin and drugs. Its main function is the regulation of the colloidal osmotic pressure of blood. This is Albumin 1 (alb1) from Salmo salar (Atlantic salmon).